The following is a 409-amino-acid chain: L-cysteine:1D-myo-inositol 2-amino-2-deoxy-alpha-D-glucopyranoside ligase (409 aa).

The tract at residues 1 to 27 (MHAWPASEVPALPGQGRDLRIHDTATG) is disordered. Cys43 lines the Zn(2+) pocket. L-cysteinyl-5'-AMP contacts are provided by residues 43 to 46 (CGIT), Thr58, and 81 to 83 (NVT). The 'HIGH' region motif lies at 45 to 55 (ITPYDATHMGH). The short motif at 183–188 (ERGGDP) is the 'ERGGDP' region element. Trp224 is a binding site for L-cysteinyl-5'-AMP. Cys228 provides a ligand contact to Zn(2+). 246–248 (GSD) contacts L-cysteinyl-5'-AMP. His253 serves as a coordination point for Zn(2+). Val280 lines the L-cysteinyl-5'-AMP pocket. The short motif at 286–290 (KMSKS) is the 'KMSKS' region element.

This sequence belongs to the class-I aminoacyl-tRNA synthetase family. MshC subfamily. In terms of assembly, monomer. Zn(2+) is required as a cofactor.

It carries out the reaction 1D-myo-inositol 2-amino-2-deoxy-alpha-D-glucopyranoside + L-cysteine + ATP = 1D-myo-inositol 2-(L-cysteinylamino)-2-deoxy-alpha-D-glucopyranoside + AMP + diphosphate + H(+). Its function is as follows. Catalyzes the ATP-dependent condensation of GlcN-Ins and L-cysteine to form L-Cys-GlcN-Ins. This chain is L-cysteine:1D-myo-inositol 2-amino-2-deoxy-alpha-D-glucopyranoside ligase (mshC), found in Streptomyces coelicolor (strain ATCC BAA-471 / A3(2) / M145).